Here is a 197-residue protein sequence, read N- to C-terminus: Phosphoheptose isomerase (197 aa).

The SIS domain maps to 36 to 197 (MVQCLVSEGK…IDQQLFGSTE (162 aa)). 51–53 (NGG) serves as a coordination point for substrate. 2 residues coordinate Zn(2+): His60 and Glu64. Residues Glu64, 93 to 94 (ND), 119 to 121 (STS), Ser124, and Gln174 contribute to the substrate site. 2 residues coordinate Zn(2+): Gln174 and His182.

It belongs to the SIS family. GmhA subfamily. In terms of assembly, homotetramer. Zn(2+) serves as cofactor.

The protein localises to the cytoplasm. It carries out the reaction 2 D-sedoheptulose 7-phosphate = D-glycero-alpha-D-manno-heptose 7-phosphate + D-glycero-beta-D-manno-heptose 7-phosphate. It functions in the pathway carbohydrate biosynthesis; D-glycero-D-manno-heptose 7-phosphate biosynthesis; D-glycero-alpha-D-manno-heptose 7-phosphate and D-glycero-beta-D-manno-heptose 7-phosphate from sedoheptulose 7-phosphate: step 1/1. Functionally, catalyzes the isomerization of sedoheptulose 7-phosphate in D-glycero-D-manno-heptose 7-phosphate. This Chromohalobacter salexigens (strain ATCC BAA-138 / DSM 3043 / CIP 106854 / NCIMB 13768 / 1H11) protein is Phosphoheptose isomerase.